A 71-amino-acid polypeptide reads, in one-letter code: uncharacterized protein (71 aa).

An N-terminal signal peptide occupies residues 1–21 (MGVGLHGDHVGGELNSANAFT).

This is an uncharacterized protein from Haemophilus influenzae (strain ATCC 51907 / DSM 11121 / KW20 / Rd).